The following is a 252-amino-acid chain: Uridylate kinase (252 aa).

24–27 (KLSG) is a binding site for ATP. Residues 32 to 37 (GEEGFG) form an involved in allosteric activation by GTP region. Gly66 is a UMP binding site. Residues Gly67 and Arg71 each contribute to the ATP site. UMP-binding positions include Asp86 and 147 to 154 (TGNPFFTT). The ATP site is built by Thr174, Tyr180, and Asp183.

Belongs to the UMP kinase family. In terms of assembly, homohexamer.

Its subcellular location is the cytoplasm. It catalyses the reaction UMP + ATP = UDP + ADP. It participates in pyrimidine metabolism; CTP biosynthesis via de novo pathway; UDP from UMP (UMPK route): step 1/1. Its activity is regulated as follows. Allosterically activated by GTP. Inhibited by UTP. In terms of biological role, catalyzes the reversible phosphorylation of UMP to UDP. The polypeptide is Uridylate kinase (Alcanivorax borkumensis (strain ATCC 700651 / DSM 11573 / NCIMB 13689 / SK2)).